A 505-amino-acid chain; its full sequence is Protein nucleotidyltransferase YdiU (505 aa).

Gly-102, Gly-104, Arg-105, Lys-125, Asp-137, Gly-138, Arg-188, and Arg-195 together coordinate ATP. The active-site Proton acceptor is the Asp-264. Residues Asn-265 and Asp-274 each contribute to the Mg(2+) site. Asp-274 contributes to the ATP binding site.

It belongs to the SELO family. Mg(2+) serves as cofactor. It depends on Mn(2+) as a cofactor.

It catalyses the reaction L-seryl-[protein] + ATP = 3-O-(5'-adenylyl)-L-seryl-[protein] + diphosphate. It carries out the reaction L-threonyl-[protein] + ATP = 3-O-(5'-adenylyl)-L-threonyl-[protein] + diphosphate. The enzyme catalyses L-tyrosyl-[protein] + ATP = O-(5'-adenylyl)-L-tyrosyl-[protein] + diphosphate. The catalysed reaction is L-histidyl-[protein] + UTP = N(tele)-(5'-uridylyl)-L-histidyl-[protein] + diphosphate. It catalyses the reaction L-seryl-[protein] + UTP = O-(5'-uridylyl)-L-seryl-[protein] + diphosphate. It carries out the reaction L-tyrosyl-[protein] + UTP = O-(5'-uridylyl)-L-tyrosyl-[protein] + diphosphate. Functionally, nucleotidyltransferase involved in the post-translational modification of proteins. It can catalyze the addition of adenosine monophosphate (AMP) or uridine monophosphate (UMP) to a protein, resulting in modifications known as AMPylation and UMPylation. The protein is Protein nucleotidyltransferase YdiU of Nitrobacter winogradskyi (strain ATCC 25391 / DSM 10237 / CIP 104748 / NCIMB 11846 / Nb-255).